The sequence spans 279 residues: NADPH-dependent 7-cyano-7-deazaguanine reductase (279 aa).

Residue 86–88 (IES) participates in substrate binding. 88–89 (SK) lines the NADPH pocket. Cys187 (thioimide intermediate) is an active-site residue. Residue Asp194 is the Proton donor of the active site. Substrate is bound at residue 226 to 227 (HE). 255–256 (RG) lines the NADPH pocket.

The protein belongs to the GTP cyclohydrolase I family. QueF type 2 subfamily. Homodimer.

The protein resides in the cytoplasm. It catalyses the reaction 7-aminomethyl-7-carbaguanine + 2 NADP(+) = 7-cyano-7-deazaguanine + 2 NADPH + 3 H(+). Its pathway is tRNA modification; tRNA-queuosine biosynthesis. Functionally, catalyzes the NADPH-dependent reduction of 7-cyano-7-deazaguanine (preQ0) to 7-aminomethyl-7-deazaguanine (preQ1). This chain is NADPH-dependent 7-cyano-7-deazaguanine reductase, found in Pasteurella multocida (strain Pm70).